The primary structure comprises 315 residues: DNA-directed RNA polymerase subunit alpha (315 aa).

Positions 1–228 are alpha N-terminal domain (alpha-NTD); it reads MLEIEKPKIE…EHLRLFIGLT (228 aa). The segment at 246 to 315 is alpha C-terminal domain (alpha-CTD); that stretch reads DKILEMTIEE…LGLSLRQEDE (70 aa).

The protein belongs to the RNA polymerase alpha chain family. Homodimer. The RNAP catalytic core consists of 2 alpha, 1 beta, 1 beta' and 1 omega subunit. When a sigma factor is associated with the core the holoenzyme is formed, which can initiate transcription.

It carries out the reaction RNA(n) + a ribonucleoside 5'-triphosphate = RNA(n+1) + diphosphate. Its function is as follows. DNA-dependent RNA polymerase catalyzes the transcription of DNA into RNA using the four ribonucleoside triphosphates as substrates. This chain is DNA-directed RNA polymerase subunit alpha, found in Desulforamulus reducens (strain ATCC BAA-1160 / DSM 100696 / MI-1) (Desulfotomaculum reducens).